Here is a 166-residue protein sequence, read N- to C-terminus: 6,7-dimethyl-8-ribityllumazine synthase (166 aa).

Residues tryptophan 31, serine 63 to glutamate 65, and valine 85 to isoleucine 87 contribute to the 5-amino-6-(D-ribitylamino)uracil site. Residue glycine 90–threonine 91 coordinates (2S)-2-hydroxy-3-oxobutyl phosphate. Catalysis depends on histidine 93, which acts as the Proton donor. Phenylalanine 118 contacts 5-amino-6-(D-ribitylamino)uracil. Residue arginine 132 participates in (2S)-2-hydroxy-3-oxobutyl phosphate binding.

Belongs to the DMRL synthase family.

The enzyme catalyses (2S)-2-hydroxy-3-oxobutyl phosphate + 5-amino-6-(D-ribitylamino)uracil = 6,7-dimethyl-8-(1-D-ribityl)lumazine + phosphate + 2 H2O + H(+). The protein operates within cofactor biosynthesis; riboflavin biosynthesis; riboflavin from 2-hydroxy-3-oxobutyl phosphate and 5-amino-6-(D-ribitylamino)uracil: step 1/2. In terms of biological role, catalyzes the formation of 6,7-dimethyl-8-ribityllumazine by condensation of 5-amino-6-(D-ribitylamino)uracil with 3,4-dihydroxy-2-butanone 4-phosphate. This is the penultimate step in the biosynthesis of riboflavin. This chain is 6,7-dimethyl-8-ribityllumazine synthase, found in Cutibacterium acnes (strain DSM 16379 / KPA171202) (Propionibacterium acnes).